Consider the following 406-residue polypeptide: Cysteine desulfurase (406 aa).

An N6-(pyridoxal phosphate)lysine modification is found at K226. C364 functions as the Cysteine persulfide intermediate in the catalytic mechanism.

Belongs to the class-V pyridoxal-phosphate-dependent aminotransferase family. Csd subfamily. As to quaternary structure, homodimer. Interacts with SufE and the SufBCD complex composed of SufB, SufC and SufD. The interaction with SufE is required to mediate the direct transfer of the sulfur atom from the S-sulfanylcysteine. Pyridoxal 5'-phosphate serves as cofactor.

It localises to the cytoplasm. The enzyme catalyses (sulfur carrier)-H + L-cysteine = (sulfur carrier)-SH + L-alanine. It carries out the reaction L-selenocysteine + AH2 = hydrogenselenide + L-alanine + A + H(+). The protein operates within cofactor biosynthesis; iron-sulfur cluster biosynthesis. Functionally, cysteine desulfurases mobilize the sulfur from L-cysteine to yield L-alanine, an essential step in sulfur metabolism for biosynthesis of a variety of sulfur-containing biomolecules. Component of the suf operon, which is activated and required under specific conditions such as oxidative stress and iron limitation. Acts as a potent selenocysteine lyase in vitro, that mobilizes selenium from L-selenocysteine. Selenocysteine lyase activity is however unsure in vivo. The protein is Cysteine desulfurase of Escherichia coli (strain SE11).